The following is a 361-amino-acid chain: UDP-D-xylose:L-fucose alpha-1,3-D-xylosyltransferase 1 (361 aa).

Positions 1 to 21 (MEQKQHILKQSTFSSSPSSYS) are disordered. Topologically, residues 1-34 (MEQKQHILKQSTFSSSPSSYSSISDRPISLLSRN) are cytoplasmic. Residues 11–21 (STFSSSPSSYS) show a composition bias toward low complexity. The helical; Signal-anchor for type II membrane protein transmembrane segment at 35 to 55 (GLLLLLLALVLLLGVLLPWPG) threads the bilayer. At 56–361 (SPLFLFPNRL…ALESPLGKLE (306 aa)) the chain is on the lumenal side. N-linked (GlcNAc...) asparagine glycosylation is found at Asn92 and Asn167. The DXD motif motif lies at 190–192 (DVD). N-linked (GlcNAc...) asparagine glycans are attached at residues Asn222 and Asn286.

Belongs to the glycosyltransferase 77 family. The cofactor is Mn(2+). It depends on Mg(2+) as a cofactor. In terms of processing, glycosylated. In terms of tissue distribution, expressed in roots, rosette leaves, cauline leaves and stems.

It localises to the golgi apparatus membrane. Functionally, catalyzes the transfer of D-xylose from UDP-alpha-D-xylose onto L-fucose. Probably involved in the biosynthesis of rhamnogalacturonan II (RG-II) through xylosylation of the internal fucose moiety of the A-chain of RG-II, a structurally complex pectic polysaccharide of the primary cell wall. RG-II is essential for the cell wall integrity of rapidly growing tissues such as roots and pollen tube growth and elongation. In Arabidopsis thaliana (Mouse-ear cress), this protein is UDP-D-xylose:L-fucose alpha-1,3-D-xylosyltransferase 1.